Reading from the N-terminus, the 289-residue chain is MKVLVNNHLVEREDATVDIEDRGYQFGDGVYEVVRLYNGKFFTYNEHIDRLYASAAKIDLVIPYSKEELRALLEKLVAENNINTGNVYLQVTRGVQNPRNHVMPDDFPLEGVLTAAAREVPRNEQQFVQGGPVITEEDVRWLRCDIKSLNLLGNILAKNKAHQQNALEAVLHRGEQVTECSASNISIIKDGVLWTHAADNLILNGITRQVIIAVAKKNGIPVKEADFTLTDLREADEVFISSTTIEITPVTHIDGVQVADGKRGPITAKLHQYFVEEIVQACGELEFAK.

Tyr-31 contacts substrate. Arg-50 is a pyridoxal 5'-phosphate binding site. Substrate is bound by residues Arg-99 and His-101. Lys-147 acts as the Proton acceptor in catalysis. Residue Lys-147 is modified to N6-(pyridoxal phosphate)lysine. Residue Glu-179 coordinates pyridoxal 5'-phosphate.

The protein belongs to the class-IV pyridoxal-phosphate-dependent aminotransferase family. As to quaternary structure, homodimer. Requires pyridoxal 5'-phosphate as cofactor.

The enzyme catalyses D-alanine + 2-oxoglutarate = D-glutamate + pyruvate. In terms of biological role, acts on the D-isomers of alanine, leucine, aspartate, glutamate, aminobutyrate, norvaline and asparagine. The enzyme transfers an amino group from a substrate D-amino acid to the pyridoxal phosphate cofactor to form pyridoxamine and an alpha-keto acid in the first half-reaction. The second half-reaction is the reverse of the first, transferring the amino group from the pyridoxamine to a second alpha-keto acid to form the product D-amino acid via a ping-pong mechanism. This is an important process in the formation of D-alanine and D-glutamate, which are essential bacterial cell wall components. This Listeria monocytogenes serotype 4b (strain F2365) protein is D-alanine aminotransferase (dat).